The following is a 99-amino-acid chain: High mobility group nucleosome-binding domain-containing protein 3 (99 aa).

Basic and acidic residues-rich tracts occupy residues 1–25, 39–53, and 62–72; these read MPKR…EPTR, PEPK…KEPG, and GKKEEKQEAGK. Residues 1-99 are disordered; it reads MPKRKSPENT…KTESVDNEGE (99 aa). Ser6 bears the Phosphoserine mark. Thr10 is subject to Phosphothreonine. Residues Ser78 and Ser93 each carry the phosphoserine modification. The segment covering 81-93 has biased composition (basic and acidic residues); sequence GETKAEEAQKTES.

Belongs to the HMGN family. In terms of assembly, interacts with the ligand binding domain of the thyroid receptor (TR) (in vitro). Requires the presence of thyroid hormone for its interaction. Interacts with transcriptional regulator SEHBP. Interacts with nucleosomes. As to expression, expressed in kidney, lung, pancreas, testis, skeletal muscle, heart, thyroid gland, pituitary gland, prostate and uterus. Low expression in liver, spleen, placenta and ovaries.

It is found in the nucleus. Functionally, binds to nucleosomes, regulating chromatin structure and consequently, chromatin-dependent processes such as transcription, DNA replication and DNA repair. Affects both insulin and glucagon levels and modulates the expression of pancreatic genes involved in insulin secretion. Regulates the expression of the glucose transporter SLC2A2 by binding specifically to its promoter region and recruiting PDX1 and additional transcription factors. Regulates the expression of SLC6A9, a glycine transporter which regulates the glycine concentration in synaptic junctions in the central nervous system, by binding to its transcription start site. May play a role in ocular development and astrocyte function. This is High mobility group nucleosome-binding domain-containing protein 3 (HMGN3) from Homo sapiens (Human).